The following is a 120-amino-acid chain: uncharacterized protein (120 aa).

Residues 4–120 form the VOC domain; that stretch reads QIGTVAVYVE…EDGNVFLLKE (117 aa).

This is an uncharacterized protein from Bacillus subtilis (strain 168).